The chain runs to 610 residues: All-trans-retinol 13,14-reductase (610 aa).

An N-terminal signal peptide occupies residues 1–18 (MWLPLVLFLAVLLLAVVC).

It belongs to the carotenoid/retinoid oxidoreductase family. CrtISO subfamily. Requires NAD(+) as cofactor. The cofactor is NADP(+). FAD is required as a cofactor.

The protein resides in the endoplasmic reticulum membrane. It catalyses the reaction all-trans-13,14-dihydroretinol + A = all-trans-retinol + AH2. Its function is as follows. Catalyzes the saturation of all-trans-retinol to all-trans-13,14-dihydroretinol. Does not exhibit any activity toward all-trans-retinoic acid, nor 9-cis, 11-cis or 13-cis-retinol isomers. May play a role in the metabolism of vitamin A. Independently of retinol conversion, may regulate liver metabolism upstream of MLXIPL/ChREBP. May play a role in adipocyte differentiation. The polypeptide is All-trans-retinol 13,14-reductase (RETSAT) (Macaca fascicularis (Crab-eating macaque)).